We begin with the raw amino-acid sequence, 264 residues long: Undecaprenyl-diphosphatase (264 aa).

The next 7 helical transmembrane spans lie at 42 to 62 (ESLLFTVVLHFATALSTLVVF), 82 to 102 (TQFSLKIIISMLPAVIVGLLF), 109 to 129 (LFGGNILFVGFMLLITALLLW), 146 to 166 (AFIIGVSQAIAMLPGISRSGA), 184 to 204 (FSFLMVVPLIFGKIAKDLMSG), 215 to 235 (ILATGFIAAFLAGLVACTWMI), and 243 to 263 (LSWFAIYCFVVGLAAIIFAYA).

It belongs to the UppP family.

It is found in the cell membrane. The catalysed reaction is di-trans,octa-cis-undecaprenyl diphosphate + H2O = di-trans,octa-cis-undecaprenyl phosphate + phosphate + H(+). Catalyzes the dephosphorylation of undecaprenyl diphosphate (UPP). Confers resistance to bacitracin. The protein is Undecaprenyl-diphosphatase of Christiangramia forsetii (strain DSM 17595 / CGMCC 1.15422 / KT0803) (Gramella forsetii).